The primary structure comprises 275 residues: Pyrroline-5-carboxylate reductase (275 aa).

The protein belongs to the pyrroline-5-carboxylate reductase family.

It is found in the cytoplasm. It carries out the reaction L-proline + NADP(+) = (S)-1-pyrroline-5-carboxylate + NADPH + 2 H(+). The catalysed reaction is L-proline + NAD(+) = (S)-1-pyrroline-5-carboxylate + NADH + 2 H(+). The protein operates within amino-acid biosynthesis; L-proline biosynthesis; L-proline from L-glutamate 5-semialdehyde: step 1/1. Functionally, catalyzes the reduction of 1-pyrroline-5-carboxylate (PCA) to L-proline. The polypeptide is Pyrroline-5-carboxylate reductase (Pasteurella multocida (strain Pm70)).